Here is a 253-residue protein sequence, read N- to C-terminus: uncharacterized protein (253 aa).

Ala-2 carries the N-acetylalanine modification.

It belongs to the NAD(P)-dependent epimerase/dehydratase family. In terms of assembly, homodimer.

This is an uncharacterized protein from Arabidopsis thaliana (Mouse-ear cress).